A 276-amino-acid polypeptide reads, in one-letter code: Undecaprenyl-diphosphatase (276 aa).

The next 7 membrane-spanning stretches (helical) occupy residues 48 to 68 (AANS…AIVF), 92 to 112 (LSIA…FLFE), 119 to 139 (LFSV…MLFA), 155 to 175 (ISYK…WPGF), 196 to 216 (ADFT…LSLV), 225 to 245 (DLMP…LFVV), and 255 to 275 (IKLV…LLIM).

It belongs to the UppP family.

It localises to the cell membrane. The enzyme catalyses di-trans,octa-cis-undecaprenyl diphosphate + H2O = di-trans,octa-cis-undecaprenyl phosphate + phosphate + H(+). In terms of biological role, catalyzes the dephosphorylation of undecaprenyl diphosphate (UPP). Confers resistance to bacitracin. The polypeptide is Undecaprenyl-diphosphatase (Bacillus subtilis (strain 168)).